Reading from the N-terminus, the 91-residue chain is UPF0250 protein PputGB1_4855 (91 aa).

The protein belongs to the UPF0250 family.

This is UPF0250 protein PputGB1_4855 from Pseudomonas putida (strain GB-1).